A 360-amino-acid chain; its full sequence is UDP-N-acetylglucosamine--N-acetylmuramyl-(pentapeptide) pyrophosphoryl-undecaprenol N-acetylglucosamine transferase (360 aa).

UDP-N-acetyl-alpha-D-glucosamine-binding positions include 15–17, Asn-124, Arg-165, Ser-191, and Gln-285; that span reads TGG.

This sequence belongs to the glycosyltransferase 28 family. MurG subfamily.

The protein localises to the cell inner membrane. It carries out the reaction di-trans,octa-cis-undecaprenyl diphospho-N-acetyl-alpha-D-muramoyl-L-alanyl-D-glutamyl-meso-2,6-diaminopimeloyl-D-alanyl-D-alanine + UDP-N-acetyl-alpha-D-glucosamine = di-trans,octa-cis-undecaprenyl diphospho-[N-acetyl-alpha-D-glucosaminyl-(1-&gt;4)]-N-acetyl-alpha-D-muramoyl-L-alanyl-D-glutamyl-meso-2,6-diaminopimeloyl-D-alanyl-D-alanine + UDP + H(+). The protein operates within cell wall biogenesis; peptidoglycan biosynthesis. Functionally, cell wall formation. Catalyzes the transfer of a GlcNAc subunit on undecaprenyl-pyrophosphoryl-MurNAc-pentapeptide (lipid intermediate I) to form undecaprenyl-pyrophosphoryl-MurNAc-(pentapeptide)GlcNAc (lipid intermediate II). The sequence is that of UDP-N-acetylglucosamine--N-acetylmuramyl-(pentapeptide) pyrophosphoryl-undecaprenol N-acetylglucosamine transferase from Gloeothece citriformis (strain PCC 7424) (Cyanothece sp. (strain PCC 7424)).